The sequence spans 379 residues: Cytochrome b (379 aa).

Helical transmembrane passes span 34-54, 78-99, 114-134, and 179-199; these read FGSL…LLAM, WFIR…YLHI, WNTG…GYVL, and FFAL…VHLT. Residues histidine 84 and histidine 98 each coordinate heme b. Heme b is bound by residues histidine 183 and histidine 197. Histidine 202 lines the a ubiquinone pocket. 4 helical membrane passes run 227-247, 289-309, 321-341, and 348-368; these read LKDI…AFFS, LGGV…PLLH, LSQL…WIGS, and FIII…VLFP.

This sequence belongs to the cytochrome b family. The cytochrome bc1 complex contains 11 subunits: 3 respiratory subunits (MT-CYB, CYC1 and UQCRFS1), 2 core proteins (UQCRC1 and UQCRC2) and 6 low-molecular weight proteins (UQCRH/QCR6, UQCRB/QCR7, UQCRQ/QCR8, UQCR10/QCR9, UQCR11/QCR10 and a cleavage product of UQCRFS1). This cytochrome bc1 complex then forms a dimer. It depends on heme b as a cofactor.

It localises to the mitochondrion inner membrane. Component of the ubiquinol-cytochrome c reductase complex (complex III or cytochrome b-c1 complex) that is part of the mitochondrial respiratory chain. The b-c1 complex mediates electron transfer from ubiquinol to cytochrome c. Contributes to the generation of a proton gradient across the mitochondrial membrane that is then used for ATP synthesis. The sequence is that of Cytochrome b (MT-CYB) from Struthio camelus (Common ostrich).